We begin with the raw amino-acid sequence, 396 residues long: S-adenosylmethionine synthase (396 aa).

His-16 is an ATP binding site. Position 18 (Asp-18) interacts with Mg(2+). Residue Glu-44 participates in K(+) binding. 2 residues coordinate L-methionine: Glu-57 and Gln-100. The segment at 100-110 (QSKDIALGVDK) is flexible loop. ATP contacts are provided by residues 176–178 (DGK), 243–244 (RF), Asp-252, 258–259 (RK), Ala-275, and Lys-279. Asp-252 lines the L-methionine pocket. Position 283 (Lys-283) interacts with L-methionine.

This sequence belongs to the AdoMet synthase family. Homotetramer; dimer of dimers. Mg(2+) is required as a cofactor. K(+) serves as cofactor.

Its subcellular location is the cytoplasm. It catalyses the reaction L-methionine + ATP + H2O = S-adenosyl-L-methionine + phosphate + diphosphate. It functions in the pathway amino-acid biosynthesis; S-adenosyl-L-methionine biosynthesis; S-adenosyl-L-methionine from L-methionine: step 1/1. Functionally, catalyzes the formation of S-adenosylmethionine (AdoMet) from methionine and ATP. The overall synthetic reaction is composed of two sequential steps, AdoMet formation and the subsequent tripolyphosphate hydrolysis which occurs prior to release of AdoMet from the enzyme. The chain is S-adenosylmethionine synthase from Lachnoclostridium phytofermentans (strain ATCC 700394 / DSM 18823 / ISDg) (Clostridium phytofermentans).